We begin with the raw amino-acid sequence, 172 residues long: Adenine phosphoribosyltransferase (172 aa).

It belongs to the purine/pyrimidine phosphoribosyltransferase family. Homodimer.

It localises to the cytoplasm. It catalyses the reaction AMP + diphosphate = 5-phospho-alpha-D-ribose 1-diphosphate + adenine. It functions in the pathway purine metabolism; AMP biosynthesis via salvage pathway; AMP from adenine: step 1/1. Functionally, catalyzes a salvage reaction resulting in the formation of AMP, that is energically less costly than de novo synthesis. This chain is Adenine phosphoribosyltransferase, found in Staphylococcus haemolyticus (strain JCSC1435).